Here is a 554-residue protein sequence, read N- to C-terminus: Urocanate hydratase (554 aa).

NAD(+) contacts are provided by residues 50-51 (GG), glutamine 128, 174-176 (GMG), glutamate 194, arginine 199, 240-241 (NA), 261-265 (QTSAH), 271-272 (YI), and tyrosine 320. Cysteine 408 is an active-site residue. NAD(+) is bound at residue glycine 490.

Belongs to the urocanase family. It depends on NAD(+) as a cofactor.

The protein resides in the cytoplasm. It catalyses the reaction 4-imidazolone-5-propanoate = trans-urocanate + H2O. The protein operates within amino-acid degradation; L-histidine degradation into L-glutamate; N-formimidoyl-L-glutamate from L-histidine: step 2/3. Functionally, catalyzes the conversion of urocanate to 4-imidazolone-5-propionate. The sequence is that of Urocanate hydratase from Rubrobacter xylanophilus (strain DSM 9941 / JCM 11954 / NBRC 16129 / PRD-1).